A 280-amino-acid polypeptide reads, in one-letter code: Tryptophan synthase alpha chain (280 aa).

Active-site proton acceptor residues include E49 and D60.

Belongs to the TrpA family. In terms of assembly, tetramer of two alpha and two beta chains.

It catalyses the reaction (1S,2R)-1-C-(indol-3-yl)glycerol 3-phosphate + L-serine = D-glyceraldehyde 3-phosphate + L-tryptophan + H2O. It functions in the pathway amino-acid biosynthesis; L-tryptophan biosynthesis; L-tryptophan from chorismate: step 5/5. The alpha subunit is responsible for the aldol cleavage of indoleglycerol phosphate to indole and glyceraldehyde 3-phosphate. This is Tryptophan synthase alpha chain from Corynebacterium glutamicum (strain ATCC 13032 / DSM 20300 / JCM 1318 / BCRC 11384 / CCUG 27702 / LMG 3730 / NBRC 12168 / NCIMB 10025 / NRRL B-2784 / 534).